The following is a 271-amino-acid chain: Dehydrodolichyl diphosphate synthase 7 (271 aa).

The chain crosses the membrane as a helical span at residues 24 to 41 (FLFRVLCVGPIPTNISFI).

It belongs to the UPP synthase family. The cofactor is Mg(2+).

The protein localises to the endoplasmic reticulum membrane. It functions in the pathway protein modification; protein glycosylation. Its function is as follows. Catalyzes cis-prenyl chain elongation to produce the polyprenyl backbone of dolichol, a glycosyl carrier-lipid required for the biosynthesis of several classes of glycoprotein. This is Dehydrodolichyl diphosphate synthase 7 from Arabidopsis thaliana (Mouse-ear cress).